We begin with the raw amino-acid sequence, 724 residues long: Methionine--tRNA ligase (724 aa).

Positions 12 to 22 (PYVNNIPHLGN) match the 'HIGH' region motif. The Zn(2+) site is built by C143, C146, C155, and C158. The 'KMSKS' region motif lies at 330-334 (KFSKS). K333 contacts ATP. The tRNA-binding domain maps to 560–665 (FREKVLLKVV…KNPIPGERII (106 aa)).

The protein belongs to the class-I aminoacyl-tRNA synthetase family. MetG type 1 subfamily. As to quaternary structure, homodimer. Zn(2+) serves as cofactor.

Its subcellular location is the cytoplasm. The catalysed reaction is tRNA(Met) + L-methionine + ATP = L-methionyl-tRNA(Met) + AMP + diphosphate. Functionally, is required not only for elongation of protein synthesis but also for the initiation of all mRNA translation through initiator tRNA(fMet) aminoacylation. In Borrelia garinii subsp. bavariensis (strain ATCC BAA-2496 / DSM 23469 / PBi) (Borreliella bavariensis), this protein is Methionine--tRNA ligase.